We begin with the raw amino-acid sequence, 215 residues long: N-(5'-phosphoribosyl)anthranilate isomerase (215 aa).

The protein belongs to the TrpF family.

It catalyses the reaction N-(5-phospho-beta-D-ribosyl)anthranilate = 1-(2-carboxyphenylamino)-1-deoxy-D-ribulose 5-phosphate. Its pathway is amino-acid biosynthesis; L-tryptophan biosynthesis; L-tryptophan from chorismate: step 3/5. This Rhizobium meliloti (strain 1021) (Ensifer meliloti) protein is N-(5'-phosphoribosyl)anthranilate isomerase.